Here is a 387-residue protein sequence, read N- to C-terminus: MKKGIAILGSTGSIGTQALDVIDHHPGRFRVVALAAGRQVERLAEQALRFRPALLSVADADAAAALRALLLAEAGDYRPEIAWGREGLIRAATHPESGLVLTSVVGAMGVEPTLAAIEAGKDIALANKETLVAAGELVTAAAQARGVKLLPVDSEHSAIFQSLAGADPGSVRRILLTASGGPFRGRKDLTGVTREEALRHPRWTMGAKVTIDSATLMNKALEMIEAHWLFGVPMEQIEVIVHPQSILHSAVEFCDGNIIAQLGPTDMRLPIQYALCYPERCRGFVEPLDLIALGALTFERPDEETFPSLRYARRAVTMGGTMPAVLNAANEVAVQRFLAGEIPFTGIFQLVAGVMDRHDPVQRPDLAAILAADRWARDAAREQPVRM.

Residues Thr-11, Gly-12, Ser-13, Ile-14, Gly-37, Arg-38, Gln-39, and Asn-127 each coordinate NADPH. Lys-128 provides a ligand contact to 1-deoxy-D-xylulose 5-phosphate. Position 129 (Glu-129) interacts with NADPH. Asp-153 provides a ligand contact to Mn(2+). Residues Ser-154, Glu-155, Ser-179, and His-200 each coordinate 1-deoxy-D-xylulose 5-phosphate. Glu-155 is a Mn(2+) binding site. Gly-206 is an NADPH binding site. 1-deoxy-D-xylulose 5-phosphate contacts are provided by Ser-213, Asn-218, Lys-219, and Glu-222. Residue Glu-222 participates in Mn(2+) binding.

The protein belongs to the DXR family. It depends on Mg(2+) as a cofactor. The cofactor is Mn(2+).

The enzyme catalyses 2-C-methyl-D-erythritol 4-phosphate + NADP(+) = 1-deoxy-D-xylulose 5-phosphate + NADPH + H(+). It functions in the pathway isoprenoid biosynthesis; isopentenyl diphosphate biosynthesis via DXP pathway; isopentenyl diphosphate from 1-deoxy-D-xylulose 5-phosphate: step 1/6. Catalyzes the NADPH-dependent rearrangement and reduction of 1-deoxy-D-xylulose-5-phosphate (DXP) to 2-C-methyl-D-erythritol 4-phosphate (MEP). The chain is 1-deoxy-D-xylulose 5-phosphate reductoisomerase from Symbiobacterium thermophilum (strain DSM 24528 / JCM 14929 / IAM 14863 / T).